The sequence spans 200 residues: Charged multivesicular body protein 6 (200 aa).

The N-myristoyl glycine moiety is linked to residue Gly2. The stretch at 10 to 94 forms a coiled coil; sequence RSRVTEQDKA…ERMVQDIEFT (85 aa). Positions 168-179 match the Type-2 MIT-interacting motif motif; sequence LELPDVPSEPLP. Positions 169–200 are disordered; sequence ELPDVPSEPLPEEPPEATPVKNRPKPELVAAS.

It belongs to the SNF7 family. In terms of assembly, probable core component of the endosomal sorting required for transport complex III (ESCRT-III). ESCRT-III components are thought to multimerize to form a flat lattice on the perimeter membrane of the endosome.

It is found in the endomembrane system. Its subcellular location is the late endosome membrane. In terms of biological role, probable core component of the endosomal sorting required for transport complex III (ESCRT-III) which is involved in multivesicular bodies (MVBs) formation and sorting of endosomal cargo proteins into MVBs. MVBs contain intraluminal vesicles (ILVs) that are generated by invagination and scission from the limiting membrane of the endosome and mostly are delivered to lysosomes enabling degradation of membrane proteins, such as stimulated growth factor receptors, lysosomal enzymes and lipids. In the ESCRT-III complex, it probably serves as an acceptor for the ESCRT-II complex on endosomal membranes. This is Charged multivesicular body protein 6 (CHMP6) from Gallus gallus (Chicken).